Reading from the N-terminus, the 352-residue chain is Ribosomal RNA large subunit methyltransferase M (352 aa).

Residues Ser-184, 217–220, Asp-236, Asp-256, and Asp-272 contribute to the S-adenosyl-L-methionine site; that span reads APGG. Lys-301 acts as the Proton acceptor in catalysis.

The protein belongs to the class I-like SAM-binding methyltransferase superfamily. RNA methyltransferase RlmE family. RlmM subfamily. Monomer.

The protein localises to the cytoplasm. It carries out the reaction cytidine(2498) in 23S rRNA + S-adenosyl-L-methionine = 2'-O-methylcytidine(2498) in 23S rRNA + S-adenosyl-L-homocysteine + H(+). Catalyzes the 2'-O-methylation at nucleotide C2498 in 23S rRNA. This chain is Ribosomal RNA large subunit methyltransferase M, found in Pseudomonas aeruginosa (strain LESB58).